The chain runs to 379 residues: uncharacterized protein (379 aa).

Residues 7-27 form a helical membrane-spanning segment; it reads VYIFAGIFLFIALIILIKIFF.

The protein localises to the membrane. This is an uncharacterized protein from Caenorhabditis elegans.